Reading from the N-terminus, the 368-residue chain is Nicotinamide/nicotinic acid mononucleotide adenylyltransferase (368 aa).

The span at 1–14 shows a compositional bias: polar residues; that stretch reads MHTMNGDNFANSFP. Residues 1–25 form a disordered region; that stretch reads MHTMNGDNFANSFPKNPLLSRNSSS. S36 is subject to Phosphoserine. Positions 47-78 are disordered; that stretch reads AKEHEERIRRPSVNRAWQKNSTSGGPSVSLEK. Residues 61–72 are compositionally biased toward polar residues; that stretch reads RAWQKNSTSGGP. Phosphoserine occurs at positions 75 and 85. The NAD(+) site is built by S135 and F136. H143 contributes to the ATP binding site. T215, G250, D252, W263, R282, and N313 together coordinate NAD(+). 318 to 321 lines the ATP pocket; that stretch reads TKVR.

It belongs to the eukaryotic NMN adenylyltransferase family. A divalent metal cation is required as a cofactor.

The protein resides in the cytoplasm. Its subcellular location is the nucleus. It catalyses the reaction beta-nicotinamide D-ribonucleotide + ATP + H(+) = diphosphate + NAD(+). The enzyme catalyses nicotinate beta-D-ribonucleotide + ATP + H(+) = deamido-NAD(+) + diphosphate. Its pathway is cofactor biosynthesis; NAD(+) biosynthesis; deamido-NAD(+) from nicotinate D-ribonucleotide: step 1/1. It functions in the pathway cofactor biosynthesis; NAD(+) biosynthesis; NAD(+) from nicotinamide D-ribonucleotide: step 1/1. Its function is as follows. Catalyzes the formation of NAD(+) from nicotinamide mononucleotide (NMN) and ATP. Can also use the deamidated form; nicotinic acid mononucleotide (NaMN) as substrate to form deamido-NAD(+) (NaAD). Key enzyme in both de novo and salvage pathways for NAD(+) biosynthesis. This is Nicotinamide/nicotinic acid mononucleotide adenylyltransferase from Schizosaccharomyces pombe (strain 972 / ATCC 24843) (Fission yeast).